Here is a 99-residue protein sequence, read N- to C-terminus: Small ribosomal subunit protein bS20 (99 aa).

Positions 1-20 are enriched in basic residues; that stretch reads MASAKPKKKNPRLASGRKRV. A disordered region spans residues 1–21; that stretch reads MASAKPKKKNPRLASGRKRVR.

The protein belongs to the bacterial ribosomal protein bS20 family.

Binds directly to 16S ribosomal RNA. The sequence is that of Small ribosomal subunit protein bS20 from Verminephrobacter eiseniae (strain EF01-2).